Consider the following 563-residue polypeptide: Pentatricopeptide repeat-containing protein At4g39620, chloroplastic (563 aa).

The transit peptide at 1 to 47 (MDYLLTSPSSLRFSDFISSIPKETDHKWLRFSVNLGDARRSTRTRIT) directs the protein to the chloroplast. PPR repeat units follow at residues 132–166 (DNGV…GCRP), 167–197 (DASV…YLDK), 207–241 (NVVT…PVSP), 242–276 (DVYT…ECKP), 277–311 (DIIT…KEKP), 312–346 (TLPT…NYIP), 347–381 (SFIT…DRVL), 382–416 (KAST…RVHP), and 417–451 (DAST…GIVP). Disordered stretches follow at residues 468-501 (PGSG…FQDK) and 520-551 (NLSG…NNMM). A compositionally biased stretch (basic and acidic residues) spans 520–537 (NLSGHDKGSRDESRKPSQ).

Belongs to the PPR family. P subfamily.

Its subcellular location is the plastid. It localises to the chloroplast. Essential for embryo development. The polypeptide is Pentatricopeptide repeat-containing protein At4g39620, chloroplastic (Arabidopsis thaliana (Mouse-ear cress)).